Consider the following 404-residue polypeptide: 8-amino-7-oxononanoate synthase (404 aa).

Position 20 (R20) interacts with substrate. Pyridoxal 5'-phosphate is bound at residue 116-117; it reads GY. Residue H141 participates in substrate binding. S187, H215, and T243 together coordinate pyridoxal 5'-phosphate. K246 bears the N6-(pyridoxal phosphate)lysine mark. Substrate is bound at residue T366.

This sequence belongs to the class-II pyridoxal-phosphate-dependent aminotransferase family. BioF subfamily. Homodimer. Pyridoxal 5'-phosphate is required as a cofactor.

It carries out the reaction 6-carboxyhexanoyl-[ACP] + L-alanine + H(+) = (8S)-8-amino-7-oxononanoate + holo-[ACP] + CO2. It participates in cofactor biosynthesis; biotin biosynthesis. Functionally, catalyzes the decarboxylative condensation of pimeloyl-[acyl-carrier protein] and L-alanine to produce 8-amino-7-oxononanoate (AON), [acyl-carrier protein], and carbon dioxide. The sequence is that of 8-amino-7-oxononanoate synthase from Cupriavidus necator (strain ATCC 17699 / DSM 428 / KCTC 22496 / NCIMB 10442 / H16 / Stanier 337) (Ralstonia eutropha).